A 483-amino-acid polypeptide reads, in one-letter code: NADH-quinone oxidoreductase subunit N (483 aa).

13 helical membrane-spanning segments follow: residues 11-31, 37-57, 82-100, 110-130, 164-184, 205-225, 239-259, 268-288, 301-321, 329-349, 372-392, 406-426, and 446-466; these read ALPEIIILCMAMFVLLLDLFL, SLIYIFTQLGLAAAAVVTACT, LMMYLTTSVMLVYTRQYVS, FALTLFALLGMMIMVSGQHFL, FVLGALSSGMLLYGMSMLYGV, AVLVLGVVFLIAGLGFKLGAV, PTAVTLFIGSVTKLAAFAFMI, VLAIDWQGMLAIMAVLSILIG, MLAYSTISHVGYLLYGFMSAG, MFYIMAYVLMTLGGFGIMLLL, YAFLMLIIMFSMAGVPPTLGF, GFVGLVIFAVVMAAIGGFYYL, and PIDMKVLLSLNALLLLALGMF.

This sequence belongs to the complex I subunit 2 family. In terms of assembly, NDH-1 is composed of 14 different subunits. Subunits NuoA, H, J, K, L, M, N constitute the membrane sector of the complex.

Its subcellular location is the cell inner membrane. It carries out the reaction a quinone + NADH + 5 H(+)(in) = a quinol + NAD(+) + 4 H(+)(out). Its function is as follows. NDH-1 shuttles electrons from NADH, via FMN and iron-sulfur (Fe-S) centers, to quinones in the respiratory chain. The immediate electron acceptor for the enzyme in this species is believed to be ubiquinone. Couples the redox reaction to proton translocation (for every two electrons transferred, four hydrogen ions are translocated across the cytoplasmic membrane), and thus conserves the redox energy in a proton gradient. In Methylovorus glucosotrophus (strain SIP3-4), this protein is NADH-quinone oxidoreductase subunit N.